The following is a 103-amino-acid chain: Small ribosomal subunit protein uS10 (103 aa).

This sequence belongs to the universal ribosomal protein uS10 family. Part of the 30S ribosomal subunit.

In terms of biological role, involved in the binding of tRNA to the ribosomes. The sequence is that of Small ribosomal subunit protein uS10 from Acinetobacter baumannii (strain AB307-0294).